The chain runs to 162 residues: MNRIKDFFRTFLLFELIKGMMLTGRNMFARKITVYFPEEKTPQSPRFRGLHALRRYPNGEERCIACKLCEAVCPALAITIESEQREDGTRRTTRYDIDLTKCIFCGFCEESCPVDSIVETRILEYHGEKRGDLIYTKQMLLAVGDRYEEQIAKDRAADAGYR.

4Fe-4S ferredoxin-type domains follow at residues 53-83 (LRRYPNGEERCIACKLCEAVCPALAITIESE) and 93-122 (TRYDIDLTKCIFCGFCEESCPVDSIVETRI). Residues Cys-63, Cys-66, Cys-69, Cys-73, Cys-102, Cys-105, Cys-108, and Cys-112 each contribute to the [4Fe-4S] cluster site.

Belongs to the complex I 23 kDa subunit family. In terms of assembly, NDH-1 is composed of 14 different subunits. Subunits NuoA, H, J, K, L, M, N constitute the membrane sector of the complex. [4Fe-4S] cluster serves as cofactor.

It localises to the cell inner membrane. It catalyses the reaction a quinone + NADH + 5 H(+)(in) = a quinol + NAD(+) + 4 H(+)(out). NDH-1 shuttles electrons from NADH, via FMN and iron-sulfur (Fe-S) centers, to quinones in the respiratory chain. The immediate electron acceptor for the enzyme in this species is believed to be ubiquinone. Couples the redox reaction to proton translocation (for every two electrons transferred, four hydrogen ions are translocated across the cytoplasmic membrane), and thus conserves the redox energy in a proton gradient. This Nitrosospira multiformis (strain ATCC 25196 / NCIMB 11849 / C 71) protein is NADH-quinone oxidoreductase subunit I 2.